The primary structure comprises 182 residues: ATP synthase subunit delta (182 aa).

This sequence belongs to the ATPase delta chain family. F-type ATPases have 2 components, F(1) - the catalytic core - and F(0) - the membrane proton channel. F(1) has five subunits: alpha(3), beta(3), gamma(1), delta(1), epsilon(1). CF(0) has four main subunits: a(1), b(1), b'(1) and c(10-14). The alpha and beta chains form an alternating ring which encloses part of the gamma chain. F(1) is attached to F(0) by a central stalk formed by the gamma and epsilon chains, while a peripheral stalk is formed by the delta, b and b' chains.

The protein localises to the cellular thylakoid membrane. F(1)F(0) ATP synthase produces ATP from ADP in the presence of a proton or sodium gradient. F-type ATPases consist of two structural domains, F(1) containing the extramembraneous catalytic core and F(0) containing the membrane proton channel, linked together by a central stalk and a peripheral stalk. During catalysis, ATP synthesis in the catalytic domain of F(1) is coupled via a rotary mechanism of the central stalk subunits to proton translocation. Its function is as follows. This protein is part of the stalk that links CF(0) to CF(1). It either transmits conformational changes from CF(0) to CF(1) or is implicated in proton conduction. The chain is ATP synthase subunit delta from Synechococcus sp. (strain CC9311).